Reading from the N-terminus, the 128-residue chain is Aspartate 1-decarboxylase (128 aa).

S25 serves as the catalytic Schiff-base intermediate with substrate; via pyruvic acid. Pyruvic acid (Ser) is present on S25. T57 contributes to the substrate binding site. The active-site Proton donor is the Y58. 73 to 75 (GAA) lines the substrate pocket.

It belongs to the PanD family. In terms of assembly, heterooctamer of four alpha and four beta subunits. Pyruvate is required as a cofactor. In terms of processing, is synthesized initially as an inactive proenzyme, which is activated by self-cleavage at a specific serine bond to produce a beta-subunit with a hydroxyl group at its C-terminus and an alpha-subunit with a pyruvoyl group at its N-terminus.

It localises to the cytoplasm. It catalyses the reaction L-aspartate + H(+) = beta-alanine + CO2. It functions in the pathway cofactor biosynthesis; (R)-pantothenate biosynthesis; beta-alanine from L-aspartate: step 1/1. In terms of biological role, catalyzes the pyruvoyl-dependent decarboxylation of aspartate to produce beta-alanine. This is Aspartate 1-decarboxylase from Chlorobium luteolum (strain DSM 273 / BCRC 81028 / 2530) (Pelodictyon luteolum).